Reading from the N-terminus, the 344-residue chain is Transcription factor HRS1 (344 aa).

Residues 88–184 (IKDSSTSNEE…DGGGGRKQRR (97 aa)) are disordered. Residues 95–104 (NEEEDEEFDD) are compositionally biased toward acidic residues. Basic and acidic residues-rich tracts occupy residues 105–124 (EHGNHDPDNDSEDKNTKSDW) and 138–178 (LLPK…DGGG). The region spanning 178-238 (GGRKQRRCWS…HLQKYRLHTR (61 aa)) is the HTH myb-type domain. The segment at residues 209-234 (PKQIREFMKVDGLTNDEVKSHLQKYR) is a DNA-binding region (H-T-H motif). Residues 269 to 291 (STGKTTGGATTSSTTTTTGIYGT) are compositionally biased toward low complexity. The interval 269 to 322 (STGKTTGGATTSSTTTTTGIYGTMAAPPPPQWPSHSNYRPSIIVDEGSGSHSEG) is disordered.

In terms of tissue distribution, expressed in the root hair region and root hair cells.

The protein localises to the nucleus. In terms of biological role, transcription factor involved in nitrate and phosphate signaling in roots. Integrates nitrate and phosphate starvation responses and adaptation of root architecture depending on nutrient availabilities. Acts downstream of the nitrate sensor and transporter NPF6.3/NRT1.1. Represses primary root development in response to phosphate deficiency conditions, only when nitrate is present. Involved in the modulation of primary root and root hair growth in phosphate-deprived environment. May be required for suppressing abscisic acid (ABA) signaling in germinating embryo axis, which promotes the timely germination of seeds. The polypeptide is Transcription factor HRS1 (Arabidopsis thaliana (Mouse-ear cress)).